The primary structure comprises 1482 residues: Chromosome partition protein MukB (1482 aa).

An ATP-binding site is contributed by 34–41; the sequence is GGNGAGKS. Coiled coils occupy residues 337 to 468, 509 to 604, 780 to 805, 835 to 1044, 1070 to 1115, and 1210 to 1265; these read LNLV…LSVA, QHLA…APIW, RAAR…ATLS, EAEI…ELVD, TNRA…TAKA, and EAIE…LQAV. Residues 666-783 are flexible hinge; sequence PGGAEDQRLV…AVPLFGRAAR (118 aa).

It belongs to the SMC family. MukB subfamily. In terms of assembly, homodimerization via its hinge domain. Binds to DNA via its C-terminal region. Interacts, and probably forms a ternary complex, with MukE and MukF via its C-terminal region. The complex formation is stimulated by calcium or magnesium. Interacts with tubulin-related protein FtsZ.

It localises to the cytoplasm. The protein localises to the nucleoid. Its function is as follows. Plays a central role in chromosome condensation, segregation and cell cycle progression. Functions as a homodimer, which is essential for chromosome partition. Involved in negative DNA supercoiling in vivo, and by this means organize and compact chromosomes. May achieve or facilitate chromosome segregation by condensation DNA from both sides of a centrally located replisome during cell division. The polypeptide is Chromosome partition protein MukB (Serratia proteamaculans (strain 568)).